A 405-amino-acid polypeptide reads, in one-letter code: Methylamine dehydrogenase heavy chain (405 aa).

A signal peptide spans 1–36 (MTTFDHPSMIRQPKPTGLAGGLVLAALMLSSSLALA).

It belongs to the aromatic amine dehydrogenase heavy chain family. Tetramer of two light and two heavy chains.

Its subcellular location is the periplasm. It catalyses the reaction 2 oxidized [amicyanin] + methylamine + H2O = 2 reduced [amicyanin] + formaldehyde + NH4(+) + 2 H(+). Its function is as follows. Methylamine dehydrogenase carries out the oxidation of methylamine. Electrons are passed from methylamine dehydrogenase to amicyanin. This chain is Methylamine dehydrogenase heavy chain (mauB), found in Methylophilus methylotrophus (Bacterium W3A1).